The chain runs to 184 residues: Large ribosomal subunit protein uL6 (184 aa).

Belongs to the universal ribosomal protein uL6 family. In terms of assembly, part of the 50S ribosomal subunit.

Its function is as follows. This protein binds to the 23S rRNA, and is important in its secondary structure. It is located near the subunit interface in the base of the L7/L12 stalk, and near the tRNA binding site of the peptidyltransferase center. This Fervidobacterium nodosum (strain ATCC 35602 / DSM 5306 / Rt17-B1) protein is Large ribosomal subunit protein uL6.